The sequence spans 252 residues: 2-succinyl-6-hydroxy-2,4-cyclohexadiene-1-carboxylate synthase (252 aa).

It belongs to the AB hydrolase superfamily. MenH family. In terms of assembly, monomer.

The enzyme catalyses 5-enolpyruvoyl-6-hydroxy-2-succinyl-cyclohex-3-ene-1-carboxylate = (1R,6R)-6-hydroxy-2-succinyl-cyclohexa-2,4-diene-1-carboxylate + pyruvate. It functions in the pathway quinol/quinone metabolism; 1,4-dihydroxy-2-naphthoate biosynthesis; 1,4-dihydroxy-2-naphthoate from chorismate: step 3/7. It participates in quinol/quinone metabolism; menaquinone biosynthesis. Catalyzes a proton abstraction reaction that results in 2,5-elimination of pyruvate from 2-succinyl-5-enolpyruvyl-6-hydroxy-3-cyclohexene-1-carboxylate (SEPHCHC) and the formation of 2-succinyl-6-hydroxy-2,4-cyclohexadiene-1-carboxylate (SHCHC). The chain is 2-succinyl-6-hydroxy-2,4-cyclohexadiene-1-carboxylate synthase from Salmonella arizonae (strain ATCC BAA-731 / CDC346-86 / RSK2980).